A 392-amino-acid chain; its full sequence is 1-deoxy-D-xylulose 5-phosphate reductoisomerase (392 aa).

Residues Thr-10, Gly-11, Ser-12, Ile-13, Asn-38, and Asn-124 each coordinate NADPH. Residue Lys-125 participates in 1-deoxy-D-xylulose 5-phosphate binding. NADPH is bound at residue Glu-126. Residue Asp-150 participates in Mn(2+) binding. Residues Ser-151, Glu-152, Ser-176, and His-199 each coordinate 1-deoxy-D-xylulose 5-phosphate. A Mn(2+)-binding site is contributed by Glu-152. NADPH is bound at residue Gly-205. Residues Ser-212, Asn-217, Lys-218, and Glu-221 each coordinate 1-deoxy-D-xylulose 5-phosphate. Mn(2+) is bound at residue Glu-221.

The protein belongs to the DXR family. Mg(2+) is required as a cofactor. The cofactor is Mn(2+).

The enzyme catalyses 2-C-methyl-D-erythritol 4-phosphate + NADP(+) = 1-deoxy-D-xylulose 5-phosphate + NADPH + H(+). It functions in the pathway isoprenoid biosynthesis; isopentenyl diphosphate biosynthesis via DXP pathway; isopentenyl diphosphate from 1-deoxy-D-xylulose 5-phosphate: step 1/6. Its function is as follows. Catalyzes the NADPH-dependent rearrangement and reduction of 1-deoxy-D-xylulose-5-phosphate (DXP) to 2-C-methyl-D-erythritol 4-phosphate (MEP). The chain is 1-deoxy-D-xylulose 5-phosphate reductoisomerase from Synechococcus sp. (strain JA-2-3B'a(2-13)) (Cyanobacteria bacterium Yellowstone B-Prime).